The primary structure comprises 557 residues: Glucose-6-phosphate isomerase (557 aa).

The Proton donor role is filled by Glu361. Residues His392 and Lys520 contribute to the active site.

This sequence belongs to the GPI family.

Its subcellular location is the cytoplasm. It catalyses the reaction alpha-D-glucose 6-phosphate = beta-D-fructose 6-phosphate. It functions in the pathway carbohydrate biosynthesis; gluconeogenesis. It participates in carbohydrate degradation; glycolysis; D-glyceraldehyde 3-phosphate and glycerone phosphate from D-glucose: step 2/4. In terms of biological role, catalyzes the reversible isomerization of glucose-6-phosphate to fructose-6-phosphate. The chain is Glucose-6-phosphate isomerase from Acinetobacter baylyi (strain ATCC 33305 / BD413 / ADP1).